Here is a 360-residue protein sequence, read N- to C-terminus: Inward rectifier potassium channel 13 (360 aa).

Over 1 to 50 (MESSNCKVITPLLSQRHRRMVTKDGHSTLQTDGAPRGLVYLRDAWGTLID) the chain is Cytoplasmic. Residues 51–77 (MRWRWVMLVFSASFVLHWLVFAVLWYV) traverse the membrane as a helical segment. Residues 78–105 (LAEMNGDLELDHDAPPENHTICVKYITS) lie on the Extracellular side of the membrane. The segment at residues 106–122 (FTAAFSFSLETQLTIGY) is an intramembrane region (helical; Pore-forming). Residues 119–124 (TIGYGT) carry the Selectivity filter motif. The Extracellular segment spans residues 123–131 (GTMFPSGDC). Residues 132–157 (PSAIALLAIQMLLGLMLEAFITGAFV) form a helical membrane-spanning segment. Residues 158 to 360 (AKIARPKNRA…FQISETGLTE (203 aa)) lie on the Cytoplasmic side of the membrane. Ser-201 is modified (phosphoserine; by PKC). Phosphoserine; by PKA is present on Ser-287.

This sequence belongs to the inward rectifier-type potassium channel (TC 1.A.2.1) family. KCNJ13 subfamily. In terms of assembly, homotetramer. In terms of processing, phosphorylation at Ser-201 by PKC strongly inhibits ionic currents, while phosphorylation at Ser-287 by PKA increases them.

It is found in the membrane. It localises to the cell membrane. The catalysed reaction is K(+)(in) = K(+)(out). Inhibited by Ba(2+) and Cs(+), although sensitivity to those inhibitors is much lower than in other Kir channels. In terms of biological role, inward rectifier potassium channels are characterized by a greater tendency to allow potassium to flow into the cell rather than out of it. Their voltage dependence is regulated by the concentration of extracellular potassium; as external potassium is raised, the voltage range of the channel opening shifts to more positive voltages. The inward rectification is mainly due to the blockage of outward current by internal magnesium. KCNJ13 has a very low single channel conductance, low sensitivity to block by external barium and cesium, and no dependence of its inward rectification properties on the internal blocking particle magnesium. This chain is Inward rectifier potassium channel 13 (KCNJ13), found in Cavia porcellus (Guinea pig).